A 268-amino-acid polypeptide reads, in one-letter code: Protein atz-1 (268 aa).

A coiled-coil region spans residues valine 171–glutamate 243. The interval aspartate 229–glutamate 268 is disordered. Over residues methionine 231–glutamate 268 the composition is skewed to acidic residues.

The protein localises to the nucleus. Functionally, plays a role in meiosis, germline development and oocyte morphogenesis. May play a role in DNA replication. In the germline, involved in the maintenance of transition zone nuclei and in chromosome structure and organization, but not required for mitotic proliferation. This Caenorhabditis elegans protein is Protein atz-1.